A 543-amino-acid polypeptide reads, in one-letter code: Zinc metalloproteinase (543 aa).

Residues Met1 to Ala24 form the signal peptide. Positions Ala25–Thr207 are excised as a propeptide. Zn(2+) is bound at residue His377. Glu378 is a catalytic residue. Zn(2+) contacts are provided by His381 and Glu401. His463 (proton donor) is an active-site residue.

It belongs to the peptidase M4 family. It depends on Zn(2+) as a cofactor.

It localises to the secreted. Its function is as follows. Cleaves collagen, gelatin, casein, alpha-1-antitrypsin, and bovine insulin. May play a role in the pathogenesis of legionnaires disease. In Legionella pneumophila, this protein is Zinc metalloproteinase.